The primary structure comprises 705 residues: Phosphoribosylformylglycinamidine synthase subunit PurL (705 aa).

His32 is a catalytic residue. Tyr35 is an ATP binding site. Glu76 provides a ligand contact to Mg(2+). Residues 77 to 80 and Arg99 each bind substrate; that span reads SHNH. His78 serves as the catalytic Proton acceptor. Asp100 provides a ligand contact to Mg(2+). Gln224 contributes to the substrate binding site. Residue Asp252 participates in Mg(2+) binding. 296 to 298 contributes to the substrate binding site; sequence ESQ. ATP contacts are provided by Asp471 and Gly508. Asn509 contacts Mg(2+). Ser511 lines the substrate pocket.

The protein belongs to the FGAMS family. As to quaternary structure, monomer. Part of the FGAM synthase complex composed of 1 PurL, 1 PurQ and 2 PurS subunits.

The protein localises to the cytoplasm. The catalysed reaction is N(2)-formyl-N(1)-(5-phospho-beta-D-ribosyl)glycinamide + L-glutamine + ATP + H2O = 2-formamido-N(1)-(5-O-phospho-beta-D-ribosyl)acetamidine + L-glutamate + ADP + phosphate + H(+). Its pathway is purine metabolism; IMP biosynthesis via de novo pathway; 5-amino-1-(5-phospho-D-ribosyl)imidazole from N(2)-formyl-N(1)-(5-phospho-D-ribosyl)glycinamide: step 1/2. Its function is as follows. Part of the phosphoribosylformylglycinamidine synthase complex involved in the purines biosynthetic pathway. Catalyzes the ATP-dependent conversion of formylglycinamide ribonucleotide (FGAR) and glutamine to yield formylglycinamidine ribonucleotide (FGAM) and glutamate. The FGAM synthase complex is composed of three subunits. PurQ produces an ammonia molecule by converting glutamine to glutamate. PurL transfers the ammonia molecule to FGAR to form FGAM in an ATP-dependent manner. PurS interacts with PurQ and PurL and is thought to assist in the transfer of the ammonia molecule from PurQ to PurL. In Pyrococcus abyssi (strain GE5 / Orsay), this protein is Phosphoribosylformylglycinamidine synthase subunit PurL.